Here is a 95-residue protein sequence, read N- to C-terminus: Signal recognition particle 19 kDa protein (95 aa).

Belongs to the SRP19 family. As to quaternary structure, part of the signal recognition particle protein translocation system, which is composed of SRP and FtsY. Archaeal SRP consists of a 7S RNA molecule of 300 nucleotides and two protein subunits: SRP54 and SRP19.

Its subcellular location is the cytoplasm. Its function is as follows. Involved in targeting and insertion of nascent membrane proteins into the cytoplasmic membrane. Binds directly to 7S RNA and mediates binding of the 54 kDa subunit of the SRP. This chain is Signal recognition particle 19 kDa protein, found in Methanococcoides burtonii (strain DSM 6242 / NBRC 107633 / OCM 468 / ACE-M).